We begin with the raw amino-acid sequence, 169 residues long: Inorganic pyrophosphatase (169 aa).

Residues lysine 20, arginine 34, and tyrosine 46 each contribute to the substrate site. 3 residues coordinate Mg(2+): aspartate 56, aspartate 61, and aspartate 93. Tyrosine 130 contributes to the substrate binding site.

Belongs to the PPase family. Homohexamer. The cofactor is Mg(2+).

Its subcellular location is the cytoplasm. The catalysed reaction is diphosphate + H2O = 2 phosphate + H(+). Catalyzes the hydrolysis of inorganic pyrophosphate (PPi) forming two phosphate ions. The chain is Inorganic pyrophosphatase from Methanosarcina mazei (strain ATCC BAA-159 / DSM 3647 / Goe1 / Go1 / JCM 11833 / OCM 88) (Methanosarcina frisia).